Here is a 277-residue protein sequence, read N- to C-terminus: Indole-3-glycerol phosphate synthase (277 aa).

The protein belongs to the TrpC family.

The enzyme catalyses 1-(2-carboxyphenylamino)-1-deoxy-D-ribulose 5-phosphate + H(+) = (1S,2R)-1-C-(indol-3-yl)glycerol 3-phosphate + CO2 + H2O. The protein operates within amino-acid biosynthesis; L-tryptophan biosynthesis; L-tryptophan from chorismate: step 4/5. This is Indole-3-glycerol phosphate synthase from Pseudomonas putida (strain W619).